The primary structure comprises 217 residues: Ribonuclease T (217 aa).

Residues valine 20–phenylalanine 195 enclose the Exonuclease domain. Mg(2+)-binding residues include aspartate 23, glutamate 25, histidine 182, and aspartate 187. The active-site Proton donor/acceptor is histidine 182.

It belongs to the RNase T family. As to quaternary structure, homodimer. Mg(2+) serves as cofactor.

Its function is as follows. Trims short 3' overhangs of a variety of RNA species, leaving a one or two nucleotide 3' overhang. Responsible for the end-turnover of tRNA: specifically removes the terminal AMP residue from uncharged tRNA (tRNA-C-C-A). Also appears to be involved in tRNA biosynthesis. The chain is Ribonuclease T from Blochmanniella pennsylvanica (strain BPEN).